A 329-amino-acid polypeptide reads, in one-letter code: Basic leucine zipper 61 (329 aa).

Disordered regions lie at residues 1-22 (MAQL…FSSQ) and 98-204 (DDVH…HDPK). Positions 10-22 (TMTTPNWPDFSSQ) are enriched in polar residues. Positions 119-133 (PTRSSSNTSTPSDHN) are enriched in low complexity. Over residues 139-154 (DNNKEAPPSDHDHHMD) the composition is skewed to basic and acidic residues. A compositionally biased stretch (low complexity) spans 155–169 (NNVANQNNAAGNNYN). The bZIP domain maps to 202-254 (DPKRVKRILANRQSAQRSRVRKLQYISELERSVTSLQTEVSVLSPRVAFLDHQ). A basic motif region spans residues 204-223 (KRVKRILANRQSAQRSRVRK). Residues 230–251 (LERSVTSLQTEVSVLSPRVAFL) form a leucine-zipper region. The segment covering 304 to 313 (KMENNVSDQS) has biased composition (polar residues). The tract at residues 304-329 (KMENNVSDQSPADIKPSVEKEQLLNV) is disordered. Over residues 319–329 (PSVEKEQLLNV) the composition is skewed to basic and acidic residues.

In terms of assembly, forms heterodimers with BZIP18, BZIP43 and VIP1/BZIP51.

The protein resides in the nucleus. In terms of biological role, transcriptional activator. The polypeptide is Basic leucine zipper 61 (Arabidopsis thaliana (Mouse-ear cress)).